Here is a 256-residue protein sequence, read N- to C-terminus: Lysine-rich coiled-coil protein 1 (256 aa).

Disordered stretches follow at residues 61-83 and 141-256; these read QRIPSGTNHSYPRSCSSSQTEDR and GHST…ILGF. 2 stretches are compositionally biased toward polar residues: residues 64–79 and 141–153; these read PSGTNHSYPRSCSSSQ and GHSTIDPQVSHRQ. 2 stretches are compositionally biased toward basic and acidic residues: residues 161–188 and 218–227; these read HLEEGRERQEERPKHERKRSSEEMDLNK and KNRDVSSKKE. Positions 208–247 form a coiled coil; the sequence is TEKLKNRKEKKNRDVSSKKEDRKRRKEKKEQGEERTEEEM.

This chain is Lysine-rich coiled-coil protein 1 (Krcc1), found in Rattus norvegicus (Rat).